A 367-amino-acid chain; its full sequence is Probable butyrate kinase (367 aa).

It belongs to the acetokinase family.

It is found in the cytoplasm. The enzyme catalyses butanoate + ATP = butanoyl phosphate + ADP. This is Probable butyrate kinase from Bacillus cytotoxicus (strain DSM 22905 / CIP 110041 / 391-98 / NVH 391-98).